The sequence spans 288 residues: Inorganic pyrophosphatase (288 aa).

Arg-80 serves as a coordination point for diphosphate. Residues Asp-117, Asp-122, and Asp-154 each contribute to the Mg(2+) site. A disordered region spans residues 252–271 (TPSYSDAAAQEIPSASPAPA). Low complexity predominate over residues 258 to 271 (AAAQEIPSASPAPA).

Belongs to the PPase family. Mg(2+) serves as cofactor.

It localises to the cytoplasm. The enzyme catalyses diphosphate + H2O = 2 phosphate + H(+). This is Inorganic pyrophosphatase (IPP1) from Candida albicans (strain SC5314 / ATCC MYA-2876) (Yeast).